The chain runs to 347 residues: MTTKMFYDKDIDTKPLENKKIAVIGYGAQGHAQANNLRVSGFDVIMGLRPGKSFDSVKKDGFEVYSAAEATAQADVVMMETPDELQAAVWEKEVEPNLKAGSDLGFSHGFNIVYGLIKPNADINVMIIAPKGPGNIERRQFVEGGGIPSLYGVHQDPTGDTAEVAKAYAKGIGSGCAGILETTFEEETTEDLFGEQAVLCGGLTQLIEAGFNTLVEAGYSPELAYFETSHEMKMIVDLIFEGGFEKMRHDCSNTCEYGEMLNGPRIITEESKQGMRDVLKDIQDGTYAKKWLAEYNSGLKDLEKMRTEYKSGLYEQTGKKVRAMMPWISDADKYSTAADTEQFSAAK.

In terms of domain architecture, KARI N-terminal Rossmann spans 3 to 182; sequence TKMFYDKDID…GSGCAGILET (180 aa). Residues 26-29, R49, S53, and 83-86 contribute to the NADP(+) site; these read YGAQ and DELQ. H108 is an active-site residue. G134 contacts NADP(+). The 146-residue stretch at 183-328 folds into the KARI C-terminal knotted domain; sequence TFEEETTEDL…KKVRAMMPWI (146 aa). 4 residues coordinate Mg(2+): D191, E195, E227, and E231. Substrate is bound at residue S252.

The protein belongs to the ketol-acid reductoisomerase family. Mg(2+) is required as a cofactor.

The enzyme catalyses (2R)-2,3-dihydroxy-3-methylbutanoate + NADP(+) = (2S)-2-acetolactate + NADPH + H(+). The catalysed reaction is (2R,3R)-2,3-dihydroxy-3-methylpentanoate + NADP(+) = (S)-2-ethyl-2-hydroxy-3-oxobutanoate + NADPH + H(+). It functions in the pathway amino-acid biosynthesis; L-isoleucine biosynthesis; L-isoleucine from 2-oxobutanoate: step 2/4. The protein operates within amino-acid biosynthesis; L-valine biosynthesis; L-valine from pyruvate: step 2/4. Involved in the biosynthesis of branched-chain amino acids (BCAA). Catalyzes an alkyl-migration followed by a ketol-acid reduction of (S)-2-acetolactate (S2AL) to yield (R)-2,3-dihydroxy-isovalerate. In the isomerase reaction, S2AL is rearranged via a Mg-dependent methyl migration to produce 3-hydroxy-3-methyl-2-ketobutyrate (HMKB). In the reductase reaction, this 2-ketoacid undergoes a metal-dependent reduction by NADPH to yield (R)-2,3-dihydroxy-isovalerate. This chain is Ketol-acid reductoisomerase (NADP(+)), found in Leuconostoc mesenteroides subsp. cremoris.